A 284-amino-acid chain; its full sequence is Diaminopimelate epimerase (284 aa).

Residues N20, Q53, and N73 each contribute to the substrate site. The active-site Proton donor is C82. Substrate is bound by residues G83–N84, N167, N200, and E218–R219. C227 (proton acceptor) is an active-site residue. A substrate-binding site is contributed by G228–S229.

The protein belongs to the diaminopimelate epimerase family. As to quaternary structure, homodimer.

The protein resides in the cytoplasm. It carries out the reaction (2S,6S)-2,6-diaminopimelate = meso-2,6-diaminopimelate. The protein operates within amino-acid biosynthesis; L-lysine biosynthesis via DAP pathway; DL-2,6-diaminopimelate from LL-2,6-diaminopimelate: step 1/1. Its function is as follows. Catalyzes the stereoinversion of LL-2,6-diaminopimelate (L,L-DAP) to meso-diaminopimelate (meso-DAP), a precursor of L-lysine and an essential component of the bacterial peptidoglycan. The protein is Diaminopimelate epimerase of Xanthomonas campestris pv. campestris (strain ATCC 33913 / DSM 3586 / NCPPB 528 / LMG 568 / P 25).